A 127-amino-acid chain; its full sequence is Apolipoprotein C-IV (127 aa).

Residues 1–27 (MSLLRNRLQDLPALCLCVLVLACIGAC) form the signal peptide. A glycan (N-linked (GlcNAc...) asparagine) is linked at asparagine 63.

It belongs to the apolipoprotein C4 family.

It is found in the secreted. In terms of biological role, may participate in lipoprotein metabolism. The chain is Apolipoprotein C-IV (APOC4) from Colobus guereza (Mantled guereza).